The following is a 492-amino-acid chain: Cytochrome P450 2B19 (492 aa).

Ser129 carries the post-translational modification Phosphoserine; by PKA. Cys437 serves as a coordination point for heme.

The protein belongs to the cytochrome P450 family. Heme is required as a cofactor. As to expression, expressed only in differentiated keratinocytes in skin.

It localises to the endoplasmic reticulum membrane. The protein localises to the microsome membrane. It carries out the reaction an organic molecule + reduced [NADPH--hemoprotein reductase] + O2 = an alcohol + oxidized [NADPH--hemoprotein reductase] + H2O + H(+). Cytochromes P450 are a group of heme-thiolate monooxygenases. In liver microsomes, this enzyme is involved in an NADPH-dependent electron transport pathway. It oxidizes a variety of structurally unrelated compounds, including steroids, fatty acids, and xenobiotics. In Mus musculus (Mouse), this protein is Cytochrome P450 2B19 (Cyp2b19).